Here is a 298-residue protein sequence, read N- to C-terminus: Lipoyl synthase (298 aa).

[4Fe-4S] cluster contacts are provided by Cys40, Cys45, Cys51, Cys67, Cys71, Cys74, and Ser280. A Radical SAM core domain is found at Ala53–Ser269.

The protein belongs to the radical SAM superfamily. Lipoyl synthase family. It depends on [4Fe-4S] cluster as a cofactor.

It is found in the cytoplasm. The catalysed reaction is [[Fe-S] cluster scaffold protein carrying a second [4Fe-4S](2+) cluster] + N(6)-octanoyl-L-lysyl-[protein] + 2 oxidized [2Fe-2S]-[ferredoxin] + 2 S-adenosyl-L-methionine + 4 H(+) = [[Fe-S] cluster scaffold protein] + N(6)-[(R)-dihydrolipoyl]-L-lysyl-[protein] + 4 Fe(3+) + 2 hydrogen sulfide + 2 5'-deoxyadenosine + 2 L-methionine + 2 reduced [2Fe-2S]-[ferredoxin]. The protein operates within protein modification; protein lipoylation via endogenous pathway; protein N(6)-(lipoyl)lysine from octanoyl-[acyl-carrier-protein]. Its function is as follows. Catalyzes the radical-mediated insertion of two sulfur atoms into the C-6 and C-8 positions of the octanoyl moiety bound to the lipoyl domains of lipoate-dependent enzymes, thereby converting the octanoylated domains into lipoylated derivatives. The sequence is that of Lipoyl synthase from Bacillus cereus (strain G9842).